Consider the following 712-residue polypeptide: Exocyst complex component EXO70I (712 aa).

Residues 1-18 (MHKKQLMALLMVPQTSDS) form the signal peptide. Residues 26-53 (LESAYSDLESLLRSSKQMEQNIETMETR) are a coiled coil. The N-linked (GlcNAc...) asparagine glycan is linked to N111.

It belongs to the EXO70 family. Subunit of the exocyst complex that mediates vesicle tethering during exocytosis. Interacts with VPY at the periarbuscular membrane (PAM) around the arbuscule hyphal tips. In terms of tissue distribution, present at low levels in non-mycorrhizal root tips.

It is found in the cell membrane. In terms of biological role, component of an exocyst subcomplex specifically required for periarbuscular membrane (PAM) biogenesis during arbuscular mycorrhizal (AM) symbiosis with AM fungi (e.g. Glomus versiforme), especially critical during the early branching phase of arbuscule development; probably involved in STR and STR2 delivery into the PAM. The polypeptide is Exocyst complex component EXO70I (Medicago truncatula (Barrel medic)).